The chain runs to 62 residues: Photosystem II reaction center protein Z (62 aa).

Helical transmembrane passes span 8-28 (AVFA…VVFA) and 41-61 (FSGT…NSLI).

It belongs to the PsbZ family. As to quaternary structure, PSII is composed of 1 copy each of membrane proteins PsbA, PsbB, PsbC, PsbD, PsbE, PsbF, PsbH, PsbI, PsbJ, PsbK, PsbL, PsbM, PsbT, PsbY, PsbZ, Psb30/Ycf12, at least 3 peripheral proteins of the oxygen-evolving complex and a large number of cofactors. It forms dimeric complexes.

Its subcellular location is the plastid. The protein localises to the chloroplast thylakoid membrane. May control the interaction of photosystem II (PSII) cores with the light-harvesting antenna, regulates electron flow through the 2 photosystem reaction centers. PSII is a light-driven water plastoquinone oxidoreductase, using light energy to abstract electrons from H(2)O, generating a proton gradient subsequently used for ATP formation. This is Photosystem II reaction center protein Z from Jasminum nudiflorum (Winter jasmine).